A 482-amino-acid polypeptide reads, in one-letter code: tRNA sulfurtransferase (482 aa).

Residues 61-165 form the THUMP domain; that stretch reads LAIRDALTRI…DDRLLLIKGR (105 aa). ATP is bound by residues 183-184, lysine 265, glycine 287, and glutamine 296; that span reads LI. Cysteines 344 and 456 form a disulfide. Residues 404-482 form the Rhodanese domain; the sequence is FGANDVILDI…GFANVKVYRP (79 aa). The Cysteine persulfide intermediate role is filled by cysteine 456.

The protein belongs to the ThiI family.

It is found in the cytoplasm. The catalysed reaction is [ThiI sulfur-carrier protein]-S-sulfanyl-L-cysteine + a uridine in tRNA + 2 reduced [2Fe-2S]-[ferredoxin] + ATP + H(+) = [ThiI sulfur-carrier protein]-L-cysteine + a 4-thiouridine in tRNA + 2 oxidized [2Fe-2S]-[ferredoxin] + AMP + diphosphate. It catalyses the reaction [ThiS sulfur-carrier protein]-C-terminal Gly-Gly-AMP + S-sulfanyl-L-cysteinyl-[cysteine desulfurase] + AH2 = [ThiS sulfur-carrier protein]-C-terminal-Gly-aminoethanethioate + L-cysteinyl-[cysteine desulfurase] + A + AMP + 2 H(+). It participates in cofactor biosynthesis; thiamine diphosphate biosynthesis. Catalyzes the ATP-dependent transfer of a sulfur to tRNA to produce 4-thiouridine in position 8 of tRNAs, which functions as a near-UV photosensor. Also catalyzes the transfer of sulfur to the sulfur carrier protein ThiS, forming ThiS-thiocarboxylate. This is a step in the synthesis of thiazole, in the thiamine biosynthesis pathway. The sulfur is donated as persulfide by IscS. The chain is tRNA sulfurtransferase from Salmonella paratyphi B (strain ATCC BAA-1250 / SPB7).